The primary structure comprises 381 residues: 1-deoxy-D-xylulose 5-phosphate reductoisomerase (381 aa).

Positions 10, 11, 12, 13, 36, 37, 38, and 122 each coordinate NADPH. Residue Lys-123 coordinates 1-deoxy-D-xylulose 5-phosphate. Glu-124 is an NADPH binding site. Residue Asp-148 participates in Mn(2+) binding. Residues Ser-149, Glu-150, Ser-173, and His-196 each contribute to the 1-deoxy-D-xylulose 5-phosphate site. Glu-150 provides a ligand contact to Mn(2+). Residue Gly-202 participates in NADPH binding. Residues Ser-209, Asn-214, Lys-215, and Glu-218 each coordinate 1-deoxy-D-xylulose 5-phosphate. Glu-218 is a Mn(2+) binding site.

The protein belongs to the DXR family. Mg(2+) serves as cofactor. Mn(2+) is required as a cofactor.

The enzyme catalyses 2-C-methyl-D-erythritol 4-phosphate + NADP(+) = 1-deoxy-D-xylulose 5-phosphate + NADPH + H(+). Its pathway is isoprenoid biosynthesis; isopentenyl diphosphate biosynthesis via DXP pathway; isopentenyl diphosphate from 1-deoxy-D-xylulose 5-phosphate: step 1/6. Functionally, catalyzes the NADPH-dependent rearrangement and reduction of 1-deoxy-D-xylulose-5-phosphate (DXP) to 2-C-methyl-D-erythritol 4-phosphate (MEP). The sequence is that of 1-deoxy-D-xylulose 5-phosphate reductoisomerase from Desulfitobacterium hafniense (strain Y51).